An 84-amino-acid chain; its full sequence is Delta-conotoxin-like MVIB (84 aa).

Positions 1–22 are cleaved as a signal peptide; the sequence is MKLTCVMIVAVLFLTAWTFVTA. A propeptide spanning residues 23–51 is cleaved from the precursor; that stretch reads DDSRYGLKDLFPKERHEMKNPEASKLNQR. Disulfide bonds link cysteine 54–cysteine 69, cysteine 61–cysteine 73, and cysteine 68–cysteine 77. Proline 65 carries the 4-hydroxyproline modification. Serine 83 bears the Serine amide mark.

This sequence belongs to the conotoxin O1 superfamily. In terms of tissue distribution, expressed by the venom duct.

The protein localises to the secreted. In terms of biological role, delta-conotoxins bind to site 6 of voltage-gated sodium channels (Nav) and inhibit the inactivation process. In Conus magus (Magical cone), this protein is Delta-conotoxin-like MVIB.